The chain runs to 191 residues: NADH-quinone oxidoreductase subunit B (191 aa).

[4Fe-4S] cluster contacts are provided by Cys52, Cys53, Cys118, and Cys148.

It belongs to the complex I 20 kDa subunit family. In terms of assembly, NDH-1 is composed of 14 different subunits. Subunits NuoB, C, D, E, F, and G constitute the peripheral sector of the complex. It depends on [4Fe-4S] cluster as a cofactor.

The protein resides in the cell inner membrane. It catalyses the reaction a quinone + NADH + 5 H(+)(in) = a quinol + NAD(+) + 4 H(+)(out). Functionally, NDH-1 shuttles electrons from NADH, via FMN and iron-sulfur (Fe-S) centers, to quinones in the respiratory chain. The immediate electron acceptor for the enzyme in this species is believed to be a menaquinone. Couples the redox reaction to proton translocation (for every two electrons transferred, four hydrogen ions are translocated across the cytoplasmic membrane), and thus conserves the redox energy in a proton gradient. This Azobacteroides pseudotrichonymphae genomovar. CFP2 protein is NADH-quinone oxidoreductase subunit B.